Here is a 551-residue protein sequence, read N- to C-terminus: Harmonin (551 aa).

Positions 1 to 86 (MDRKVAREFR…LTPRRSRKLK (86 aa)) are N-terminal domain. PDZ domains lie at 87–169 (EVRL…HIGL) and 211–293 (KVFI…AGAG). The interval 194 to 532 (GGRSSLGSPG…QKAWNQGDWI (339 aa)) is mediates interaction with MYO7B. At S219 the chain carries Phosphoserine. Residues 318-377 (LMQKRLAMESNKILQEQQEMERQRKKEIAQKAAEENERYRKEMEQIVEEEEKFRKQWEED) adopt a coiled-coil conformation. The interval 401 to 425 (KPKYDLGVDPEFDPADDLDGGTNKR) is disordered. The span at 408 to 419 (VDPEFDPADDLD) shows a compositional bias: acidic residues. A PDZ 3 domain is found at 452–536 (DVRLLRVKKE…NQGDWIDLVV (85 aa)).

As to quaternary structure, part of the IMAC/intermicrovillar adhesion complex/intermicrovillar tip-link complex composed of ANKS4B, MYO7B, USH1C, CDHR2 and CDHR5. Part of a complex composed of USH1C, USH1G and MYO7A. Interacts with F-actin. Interacts with USH2A. Interacts with SLC4A7. Interacts (via PDZ1 domain) with the C-terminus of USHBP1. Interacts (via N-terminus and PDZ 2 domain) with CDH23. Interacts with USH1G. Interacts with MYO7B. Interacts with CDHR2 and CDHR5; may mediate their interaction with MYO7B at the microvilli tip. Interacts (via PDZ 1 domain) with ANKS4B. Interacts (via PDZ 1 domain) with DOCK4.

It localises to the cytoplasm. The protein resides in the cytosol. Its subcellular location is the cytoskeleton. It is found in the cell projection. The protein localises to the microvillus. Anchoring/scaffolding protein that is a part of the functional network formed by USH1C, USH1G, CDH23 and MYO7A that mediates mechanotransduction in cochlear hair cells. Required for normal development and maintenance of cochlear hair cell bundles. As part of the intermicrovillar adhesion complex/IMAC plays a role in brush border differentiation, controlling microvilli organization and length. Probably plays a central regulatory role in the assembly of the complex, recruiting CDHR2, CDHR5 and MYO7B to the microvilli tips. The protein is Harmonin (USH1C) of Bos taurus (Bovine).